A 181-amino-acid polypeptide reads, in one-letter code: Proteinase inhibitor A (181 aa).

A signal peptide spans 1–24; sequence MAASNALLLISGVLLISLAVLCHG. Disulfide bonds link cysteine 67–cysteine 113, cysteine 134–cysteine 143, and cysteine 136–cysteine 139.

It belongs to the protease inhibitor I3 (leguminous Kunitz-type inhibitor) family.

The protein resides in the secreted. In terms of biological role, possesses two reactive sites. Inhibits an equimolar amount of trypsin and chymotrypsin simultaneously, and inhibits kallikrein weakly. This Sagittaria sagittifolia (Arrowhead) protein is Proteinase inhibitor A.